Here is a 1302-residue protein sequence, read N- to C-terminus: Zinc finger protein 536 (1302 aa).

The tract at residues 1-26 (MEEASLCLGVSSTAPEAEPHLSGPVL) is disordered. C2H2-type zinc fingers lie at residues 130-152 (YPCP…MRTH), 158-180 (FKCP…LRTH), 274-297 (FRCT…RILH), 300-323 (YKCT…EKAH), 345-367 (FRCE…MRKH), 373-395 (HCCQ…MKVH), and 631-653 (TECP…SRVH). The interval 650-736 (SRVHKRDRKS…IGEEAGRAGG (87 aa)) is disordered. The segment covering 657–676 (RKSDEDALHVGVGLEERRGS) has biased composition (basic and acidic residues). Over residues 677–698 (GSDQESQSVSRSTTPGSSNVTE) the composition is skewed to polar residues. 2 C2H2-type zinc fingers span residues 753–775 (KDCP…LRIH) and 781–803 (YKCP…LERH). Disordered stretches follow at residues 804–832 (HRER…SKAP), 855–897 (GPAS…SKSS), 935–988 (KDTK…APTL), and 1133–1261 (NKNT…GLEK). 2 positions are modified to phosphoserine: S828 and S829. The segment covering 869–883 (GDHSGQATGMPSELS) has biased composition (polar residues). The span at 935–973 (KDTKDKVPSDAHPMKAHTAEGGEEKASMKPSQRKSEKSQ) shows a compositional bias: basic and acidic residues. 2 stretches are compositionally biased toward acidic residues: residues 1161–1171 (DLSDIASSEDM) and 1179–1188 (NEDEELDTEP). Low complexity predominate over residues 1198–1212 (LSKDGSSEGGDSLLS).

The protein belongs to the krueppel C2H2-type zinc-finger protein family. In terms of tissue distribution, expressed predominantly in the brain, while a weak signal is also detected in the heart and testis. Expression is abundant in neuronal cells of the cerebral cortex, hippocampus and hypothalamic area (at protein level).

It is found in the nucleus. Its function is as follows. Transcriptional repressor that negatively regulates neuron differentiation by repressing retinoic acid-induced gene transcription. Binds and interrupts RARA from binding to retinoic acid response elements (RARE) composed of tandem 5'-AGGTCA-3' sites known as DR1-DR5. Recognizes and binds 2 copies of the core DNA sequence 5'-CCCCCA-3'. The chain is Zinc finger protein 536 (Znf536) from Mus musculus (Mouse).